A 594-amino-acid polypeptide reads, in one-letter code: Arginine--tRNA ligase (594 aa).

A 'HIGH' region motif is present at residues 139-149 (ANPTGPLHVGH).

It belongs to the class-I aminoacyl-tRNA synthetase family. As to quaternary structure, monomer.

Its subcellular location is the cytoplasm. It carries out the reaction tRNA(Arg) + L-arginine + ATP = L-arginyl-tRNA(Arg) + AMP + diphosphate. The protein is Arginine--tRNA ligase of Burkholderia thailandensis (strain ATCC 700388 / DSM 13276 / CCUG 48851 / CIP 106301 / E264).